Consider the following 252-residue polypeptide: Reaction center protein L chain (252 aa).

The next 3 membrane-spanning stretches (helical) occupy residues 8–30 (FFGV…GAAL), 58–86 (GGLW…SRKL), and 91–113 (HVPA…RPLL). H128 and H148 together coordinate (7R,8Z)-bacteriochlorophyll b. A helical membrane pass occupies residues 146-173 (PMHMVAVTLFFTTTLALALHGSLVLAAI). Residue H165 participates in Fe cation binding. A ubiquinone is bound at residue F191. A helical membrane pass occupies residues 200–225 (GTLGIHRLGLFLALGAGFASATCILL). H205 contributes to the Fe cation binding site.

This sequence belongs to the reaction center PufL/M/PsbA/D family. As to quaternary structure, reaction center is composed of four bacteriochlorophylls, two bacteriopheophytins, two ubiquinones, one iron, and two highly hydrophobic polypeptide chains (designated L and M).

Its subcellular location is the cell inner membrane. In terms of biological role, the reaction center is a membrane-bound complex that mediates the initial photochemical event in the electron transfer process of photosynthesis. This Acidiphilium cryptum protein is Reaction center protein L chain (pufL).